The chain runs to 278 residues: MNNILSEEVLNVTDFTTSRQLALWKREDLQSPQLDDVAEEVPVALVYNGISHVVMMASPKDLTHFAMGFSLSEGIIDSPREIYGMDVVPSCNGLEVQIDLSSRRFMGLKARRRALAGRTGCGVCGVEQLNDIGKPVQPLPFSQTFNLGNLDRALKHLNDFQPTGKLTGCTHAAAWVMPSGELAGGHEDVGRHVALDKLLGRRATEGEEWRQGAALVSSRASYEMVQKSAMCGVEILFAVSAATTLAVDVAERCNLTLVGFCKPGRATIYTHPQRLIAD.

Cys-121 (cysteine persulfide intermediate) is an active-site residue. Residue 260–265 participates in Mo-bis(molybdopterin guanine dinucleotide) binding; sequence FCKPGR.

It belongs to the FdhD family.

The protein localises to the cytoplasm. Functionally, required for formate dehydrogenase (FDH) activity. Acts as a sulfur carrier protein that transfers sulfur from IscS to the molybdenum cofactor prior to its insertion into FDH. This is Sulfur carrier protein FdhD from Salmonella schwarzengrund (strain CVM19633).